Here is a 418-residue protein sequence, read N- to C-terminus: Hydroxysteroid dehydrogenase-like protein 2 (418 aa).

NADP(+)-binding positions include 17–23 (GASRGIG), K42, and D74. An N6-(2-hydroxyisobutyryl)lysine modification is found at K42. K116 bears the N6-acetyllysine mark. Residue Y168 is the Proton acceptor of the active site. Residue K172 coordinates NADP(+). One can recognise an SCP2 domain in the interval 306-415 (RSGAVEETFR…KLEKLMNQMN (110 aa)). Residue K318 is modified to N6-succinyllysine.

This sequence belongs to the short-chain dehydrogenases/reductases (SDR) family.

Its subcellular location is the peroxisome. It localises to the mitochondrion. Has apparently no steroid dehydrogenase activity. Controls bile acid (BA) and lipid metabolism in response to nutritional cues. In Bos taurus (Bovine), this protein is Hydroxysteroid dehydrogenase-like protein 2 (HSDL2).